Here is an 81-residue protein sequence, read N- to C-terminus: Insect-toxin Cn10 (81 aa).

An N-terminal signal peptide occupies residues isoleucine 1–alanine 13. Positions lysine 14–arginine 79 constitute an LCN-type CS-alpha/beta domain. Cystine bridges form between cysteine 25-cysteine 78, cysteine 29-cysteine 54, cysteine 38-cysteine 59, and cysteine 42-cysteine 61. A propeptide (removed by a carboxypeptidase) is located at residue lysine 81.

It belongs to the long (4 C-C) scorpion toxin superfamily. Sodium channel inhibitor family. Beta subfamily. Expressed by the venom gland.

The protein resides in the secreted. Beta toxins bind voltage-independently at site-4 of sodium channels (Nav) and shift the voltage of activation toward more negative potentials thereby affecting sodium channel activation and promoting spontaneous and repetitive firing. Is toxic on insects and crustaceans, but not on mammals. This chain is Insect-toxin Cn10, found in Centruroides noxius (Mexican scorpion).